The following is a 493-amino-acid chain: Ubiquitin carboxyl-terminal hydrolase 14 (493 aa).

Residues 4 to 80 (YSVTVKWGKE…MMGSADALPE (77 aa)) form the Ubiquitin-like domain. At threonine 52 the chain carries Phosphothreonine. The USP domain maps to 105-483 (CGLTNLGNTC…IAYVLLYGPR (379 aa)). Cysteine 114 acts as the Nucleophile in catalysis. Serine 143 and serine 148 each carry phosphoserine. Threonine 235 bears the Phosphothreonine mark. Phosphoserine is present on residues serine 237, serine 302, and serine 432. The active-site Proton acceptor is histidine 435. Lysine 449 is modified (N6-acetyllysine).

Belongs to the peptidase C19 family. USP14/UBP6 subfamily. In terms of assembly, homodimer (Potential). Associates with the 26S proteasome. Interacts with FANCC, CXCR4 and ERN1. Interacts with TRIM14; this interaction recruits USP14 to cleave ubiquitin chains of CGAS and KDM4D.

It is found in the cytoplasm. Its subcellular location is the cell membrane. The catalysed reaction is Thiol-dependent hydrolysis of ester, thioester, amide, peptide and isopeptide bonds formed by the C-terminal Gly of ubiquitin (a 76-residue protein attached to proteins as an intracellular targeting signal).. Its function is as follows. Proteasome-associated deubiquitinase which releases ubiquitin from the proteasome targeted ubiquitinated proteins. Ensures the regeneration of ubiquitin at the proteasome. Is a reversibly associated subunit of the proteasome and a large fraction of proteasome-free protein exists within the cell. Required for the degradation of the chemokine receptor CXCR4 which is critical for CXCL12-induced cell chemotaxis. Also serves as a physiological inhibitor of endoplasmic reticulum-associated degradation (ERAD) under the non-stressed condition by inhibiting the degradation of unfolded endoplasmic reticulum proteins via interaction with ERN1. Indispensable for synaptic development and function at neuromuscular junctions (NMJs). Plays a role in the innate immune defense against viruses by stabilizing the viral DNA sensor CGAS and thus inhibiting its autophagic degradation. Inhibits OPTN-mediated selective autophagic degradation of KDM4D and thereby negatively regulates H3K9me2 and H3K9me3. The chain is Ubiquitin carboxyl-terminal hydrolase 14 (USP14) from Pan troglodytes (Chimpanzee).